We begin with the raw amino-acid sequence, 662 residues long: Glutathione hydrolase 7 (662 aa).

The Cytoplasmic segment spans residues 1 to 106 (MAAENEASQE…ASECSCRQDG (106 aa)). A phosphoserine mark is found at Ser17, Ser72, Ser79, and Ser83. A disordered region spans residues 26-90 (SFPRLPEDEP…DGSPLRETRK (65 aa)). Over residues 72-83 (SSSSEMGSQDGS) the composition is skewed to low complexity. A helical; Signal-anchor for type II membrane protein transmembrane segment spans residues 107–127 (LTVIVTACLTFATGVTVALIM). Residues 128–662 (QIYFGDPQIF…SPDAAGATIL (535 aa)) lie on the Extracellular side of the membrane. Residues Asn198, Asn267, Asn283, Asn330, Asn353, Asn394, Asn452, Asn519, and Asn586 are each glycosylated (N-linked (GlcNAc...) asparagine).

It belongs to the gamma-glutamyltransferase family. In terms of assembly, heterodimer composed of the light and heavy chains. The active site is located in the light chain. Cleaved by autocatalysis into a large and a small subunit and the autocatalytic cleavage is essential to the functional activation of the enzyme.

Its subcellular location is the membrane. The catalysed reaction is an N-terminal (5-L-glutamyl)-[peptide] + an alpha-amino acid = 5-L-glutamyl amino acid + an N-terminal L-alpha-aminoacyl-[peptide]. The enzyme catalyses glutathione + H2O = L-cysteinylglycine + L-glutamate. It catalyses the reaction an S-substituted glutathione + H2O = an S-substituted L-cysteinylglycine + L-glutamate. The protein operates within sulfur metabolism; glutathione metabolism. Its function is as follows. Hydrolyzes and transfers gamma-glutamyl moieties from glutathione and other gamma-glutamyl compounds to acceptors. The chain is Glutathione hydrolase 7 from Bos taurus (Bovine).